Reading from the N-terminus, the 238-residue chain is DNA repair protein RecO (238 aa).

This sequence belongs to the RecO family.

Functionally, involved in DNA repair and RecF pathway recombination. This Aliivibrio salmonicida (strain LFI1238) (Vibrio salmonicida (strain LFI1238)) protein is DNA repair protein RecO.